The chain runs to 140 residues: 3-hydroxyacyl-[acyl-carrier-protein] dehydratase FabZ (140 aa).

Histidine 47 is a catalytic residue.

Belongs to the thioester dehydratase family. FabZ subfamily.

Its subcellular location is the cytoplasm. The enzyme catalyses a (3R)-hydroxyacyl-[ACP] = a (2E)-enoyl-[ACP] + H2O. In terms of biological role, involved in unsaturated fatty acids biosynthesis. Catalyzes the dehydration of short chain beta-hydroxyacyl-ACPs and long chain saturated and unsaturated beta-hydroxyacyl-ACPs. This is 3-hydroxyacyl-[acyl-carrier-protein] dehydratase FabZ from Streptococcus pyogenes serotype M49 (strain NZ131).